The sequence spans 540 residues: MNTTKLLGTGALSPSFVFDHDSGNAIFGLSSSTLVVLVAMIAVSTLTLKSVLPGDRSINLPGPRGWPIVGSWFDLGNNWAEYFRQAAKEYGDVFKVHIGNRTVVVVNSPKAAHILFNEHGSSLISRPWFYTFHGVLSKSSAFTIGTSAWSDSTKNKRKAAATALNRPAVQSYMPIIVEESLDAVRRILNDGNAGKNGIVPYSYFQRLALNTSFQVNYGFRMGERDDGLFDEISEVIAKVASVRAVTGSLQDYVPLMRYLPANAKSKAAASYGLRRKKFMSKLYEELEQRVNQGKDESCITGNILKDTESRKKLSRLEIDSICLSMVSAGLDTFANTMIWTIGFLAKHPEIQRKAQAELLAHYPNRELPHVDSEDLVYIHAMAKEASRLFNVFRICLPRTNVSDVTYNNAVIPAGTTFFLNSWACNVDAEKFADPFEFKPERFMDKSASNAHVENKMGGVETYAFGMGRRMCPGVFLALREIYTTLVFLTHFFDIAPDGEYDIDPLTAVEDGRAFSVRPKPFKVRCTPRPGVDLSPVLDKQ.

Asn-2 is a glycosylation site (N-linked (GlcNAc...) asparagine). A helical transmembrane segment spans residues 26 to 46 (IFGLSSSTLVVLVAMIAVSTL). N-linked (GlcNAc...) asparagine glycosylation is found at Asn-100, Asn-210, and Asn-400. Cys-471 contributes to the heme binding site.

Belongs to the cytochrome P450 family. The cofactor is heme.

The protein resides in the membrane. It participates in secondary metabolite biosynthesis. Functionally, cytochrome P450 monooxygenase; part of the gene cluster that mediates the biosynthesis of itaconic acid and 2-hydroxyparaconate. Cis-aconitate is secreted by the mitochondrial tricarboxylate transporter MTT1. In the cytosol cis-aconitate is converted into trans-aconitate via isomerization by the aconitate-delta-isomerase ADI1. Decarboxylation of trans-aconitate by the trans-aconitate decarboxylase TAD1 then leads then to the production of itaconic acid. The cytochrome P450 monooxygenase CYP3 further converts itaconate to 2-hydroxyparaconate via oxidation of the double bond, leading to a transient epoxide, which can subsequently be lactonized to produce 2-hydroxyparaconate. Secretion of itaconate and possibly 2-hydroxyparaconate into the medium is mediated by the major facilitator ITP1. The glyoxalase domain-containing protein RDO1 is not involved in the biosynthesis of itaconate and 2-hydroxyparaconate, however, it might play a role in the further conversion of 2-hydroxyparaconate to itatartarate. In Mycosarcoma maydis (Corn smut fungus), this protein is Cytochrome P450 monooxygenase CYP3.